Consider the following 408-residue polypeptide: Phosphoglycerate kinase (408 aa).

Residues aspartate 22–asparagine 24, arginine 39, histidine 60–arginine 63, arginine 117, and arginine 157 contribute to the substrate site. ATP-binding positions include glutamate 332 and glycine 358–threonine 361.

The protein belongs to the phosphoglycerate kinase family. In terms of assembly, monomer.

The protein resides in the cytoplasm. It carries out the reaction (2R)-3-phosphoglycerate + ATP = (2R)-3-phospho-glyceroyl phosphate + ADP. Its pathway is carbohydrate degradation; glycolysis; pyruvate from D-glyceraldehyde 3-phosphate: step 2/5. The polypeptide is Phosphoglycerate kinase (Thermoplasma volcanium (strain ATCC 51530 / DSM 4299 / JCM 9571 / NBRC 15438 / GSS1)).